The chain runs to 121 residues: Cell division protein FtsB (121 aa).

Over 1–6 the chain is Cytoplasmic; it reads MRNWRW. Residues 7 to 24 traverse the membrane as a helical segment; it reads LLLVLAVLLAWLQYRFWF. The Periplasmic segment spans residues 25-121; the sequence is GPGNSGEVMM…AASADPVDHP (97 aa). A coiled-coil region spans residues 31–66; that stretch reads EVMMLEAQVAHQTRDNEGLRQRNQALAAEVKDLKDG. Residues 98–121 are disordered; the sequence is PPAAQEAAPPAQPPAASADPVDHP.

This sequence belongs to the FtsB family. Part of a complex composed of FtsB, FtsL and FtsQ.

The protein resides in the cell inner membrane. Its function is as follows. Essential cell division protein. May link together the upstream cell division proteins, which are predominantly cytoplasmic, with the downstream cell division proteins, which are predominantly periplasmic. In Xanthomonas campestris pv. campestris (strain 8004), this protein is Cell division protein FtsB.